We begin with the raw amino-acid sequence, 336 residues long: Phosphate acyltransferase (336 aa).

It belongs to the PlsX family. Homodimer. Probably interacts with PlsY.

It localises to the cytoplasm. The catalysed reaction is a fatty acyl-[ACP] + phosphate = an acyl phosphate + holo-[ACP]. It participates in lipid metabolism; phospholipid metabolism. Functionally, catalyzes the reversible formation of acyl-phosphate (acyl-PO(4)) from acyl-[acyl-carrier-protein] (acyl-ACP). This enzyme utilizes acyl-ACP as fatty acyl donor, but not acyl-CoA. The sequence is that of Phosphate acyltransferase from Pseudomonas aeruginosa (strain UCBPP-PA14).